The primary structure comprises 161 residues: UPF0178 protein BSUIS_A1819 (161 aa).

It belongs to the UPF0178 family.

This chain is UPF0178 protein BSUIS_A1819, found in Brucella suis (strain ATCC 23445 / NCTC 10510).